A 327-amino-acid polypeptide reads, in one-letter code: Interleukin-12 subunit beta (327 aa).

The N-terminal stretch at 1–22 is a signal peptide; it reads MHPQQLVVSWFSLVLLTSPIVA. Positions 23 to 106 constitute an Ig-like C2-type domain; that stretch reads IWELEKNVYV…LSRSLLLLHK (84 aa). Cys50 and Cys90 are oxidised to a cystine. Asn223 carries N-linked (GlcNAc...) asparagine glycosylation. Residues 238 to 327 form the Fibronectin type-III domain; the sequence is PPKNLQLRPL…WSEWASVSCS (90 aa).

This sequence belongs to the IL-12B family. As to quaternary structure, heterodimer with IL12A; disulfide-linked. The heterodimer is known as interleukin IL-12. Heterodimer with IL23A; disulfide-linked. The heterodimer is known as interleukin IL-23. Also secreted as a monomer. Interacts with NBR1; this interaction promotes IL-12 secretion.

It is found in the secreted. Its function is as follows. Cytokine that can act as a growth factor for activated T and NK cells, enhance the lytic activity of NK/lymphokine-activated killer cells, and stimulate the production of IFN-gamma by resting PBMC. Associates with IL23A to form the IL-23 interleukin, a heterodimeric cytokine which functions in innate and adaptive immunity. IL-23 may constitute with IL-17 an acute response to infection in peripheral tissues. IL-23 binds to a heterodimeric receptor complex composed of IL12RB1 and IL23R, activates the Jak-Stat signaling cascade, stimulates memory rather than naive T-cells and promotes production of pro-inflammatory cytokines. IL-23 induces autoimmune inflammation and thus may be responsible for autoimmune inflammatory diseases and may be important for tumorigenesis. The chain is Interleukin-12 subunit beta (IL12B) from Cervus elaphus (Red deer).